The primary structure comprises 228 residues: ATP-dependent dethiobiotin synthetase BioD (228 aa).

13 to 18 (DVGKTV) provides a ligand contact to ATP. Thr17 provides a ligand contact to Mg(2+). Lys38 is an active-site residue. ATP is bound by residues Asp55, 116–119 (EGAG), 176–177 (NR), and 205–207 (PYI). 2 residues coordinate Mg(2+): Asp55 and Glu116.

The protein belongs to the dethiobiotin synthetase family. As to quaternary structure, homodimer. It depends on Mg(2+) as a cofactor.

The protein localises to the cytoplasm. The enzyme catalyses (7R,8S)-7,8-diammoniononanoate + CO2 + ATP = (4R,5S)-dethiobiotin + ADP + phosphate + 3 H(+). Its pathway is cofactor biosynthesis; biotin biosynthesis; biotin from 7,8-diaminononanoate: step 1/2. Its function is as follows. Catalyzes a mechanistically unusual reaction, the ATP-dependent insertion of CO2 between the N7 and N8 nitrogen atoms of 7,8-diaminopelargonic acid (DAPA, also called 7,8-diammoniononanoate) to form a ureido ring. In Vibrio parahaemolyticus serotype O3:K6 (strain RIMD 2210633), this protein is ATP-dependent dethiobiotin synthetase BioD.